The sequence spans 82 residues: uncharacterized protein (82 aa).

This is an uncharacterized protein from Archaeoglobus fulgidus (strain ATCC 49558 / DSM 4304 / JCM 9628 / NBRC 100126 / VC-16).